A 745-amino-acid chain; its full sequence is Receptor-type adenylate cyclase (745 aa).

Residues 1-341 (GELGQTDRFF…NEGALTRAQL (341 aa)) lie on the Extracellular side of the membrane. N-linked (GlcNAc...) asparagine glycosylation is found at N15, N50, N189, and N312. Residues 342-362 (IGVVVGTIFAVLLLLALGIVL) traverse the membrane as a helical segment. Residues 363–745 (CVALRNTRDN…GSDEVARTCV (383 aa)) lie on the Cytoplasmic side of the membrane. The Guanylate cyclase domain maps to 384-538 (TLIFTDIESS…RTPNLAARTE (155 aa)). Mg(2+) contacts are provided by D389 and D432.

It belongs to the adenylyl cyclase class-3 family. Mg(2+) serves as cofactor.

The protein resides in the cell membrane. It carries out the reaction ATP = 3',5'-cyclic AMP + diphosphate. Could act as a receptor for an unknown ligand. In Trypanosoma congolense, this protein is Receptor-type adenylate cyclase.